The primary structure comprises 463 residues: Retinoic acid receptor RXR-gamma (463 aa).

The modulating stretch occupies residues 1–138 (MYGNYSHFMK…TSPGSLVKHI (138 aa)). Positions 18-53 (SPGHTGSTSMSPSAALSTGKPMDSHPSYTDTPVSAP) are disordered. Over residues 21–33 (HTGSTSMSPSAAL) the composition is skewed to polar residues. 2 consecutive NR C4-type zinc fingers follow at residues 139 to 159 (CAICGDRSSGKHYGVYSCEGC) and 175 to 194 (CRDNKDCLIDKRQRNRCQYC). The nuclear receptor DNA-binding region spans 139-204 (CAICGDRSSG…RYQKCLVMGM (66 aa)). The tract at residues 205 to 230 (KREAVQEERQRSRERAESEAECASSG) is hinge. A compositionally biased stretch (basic and acidic residues) spans 211 to 222 (EERQRSRERAES). The disordered stretch occupies residues 211 to 232 (EERQRSRERAESEAECASSGHE). The 229-residue stretch at 231–459 (HEDMPVERIL…TFLMEMLETP (229 aa)) folds into the NR LBD domain.

It belongs to the nuclear hormone receptor family. NR2 subfamily. As to quaternary structure, homodimer. Heterodimer with a RAR molecule. Binds DNA preferentially as a RAR/RXR heterodimer. Interacts with RARA. In terms of processing, acetylated by EP300.

It localises to the nucleus. Its subcellular location is the cytoplasm. Its function is as follows. Receptor for retinoic acid. Retinoic acid receptors bind as heterodimers to their target response elements in response to their ligands, all-trans or 9-cis retinoic acid, and regulate gene expression in various biological processes. The RAR/RXR heterodimers bind to the retinoic acid response elements (RARE) composed of tandem 5'-AGGTCA-3' sites known as DR1-DR5. The high affinity ligand for RXRs is 9-cis retinoic acid. This Pongo abelii (Sumatran orangutan) protein is Retinoic acid receptor RXR-gamma (RXRG).